The primary structure comprises 250 residues: NAD(P)H-quinone oxidoreductase subunit K (250 aa).

Residues Cys63, Cys64, Cys128, and Cys159 each coordinate [4Fe-4S] cluster.

Belongs to the complex I 20 kDa subunit family. NDH-1 can be composed of about 15 different subunits; different subcomplexes with different compositions have been identified which probably have different functions. [4Fe-4S] cluster serves as cofactor.

It is found in the cellular thylakoid membrane. The catalysed reaction is a plastoquinone + NADH + (n+1) H(+)(in) = a plastoquinol + NAD(+) + n H(+)(out). It carries out the reaction a plastoquinone + NADPH + (n+1) H(+)(in) = a plastoquinol + NADP(+) + n H(+)(out). Functionally, NDH-1 shuttles electrons from an unknown electron donor, via FMN and iron-sulfur (Fe-S) centers, to quinones in the respiratory and/or the photosynthetic chain. The immediate electron acceptor for the enzyme in this species is believed to be plastoquinone. Couples the redox reaction to proton translocation, and thus conserves the redox energy in a proton gradient. Cyanobacterial NDH-1 also plays a role in inorganic carbon-concentration. This is NAD(P)H-quinone oxidoreductase subunit K from Rippkaea orientalis (strain PCC 8801 / RF-1) (Cyanothece sp. (strain PCC 8801)).